Here is a 237-residue protein sequence, read N- to C-terminus: Purine nucleoside phosphorylase DeoD-type (237 aa).

Residue H4 coordinates a purine D-ribonucleoside. Residues G20, R24, R43, and 87-90 (RVGT) each bind phosphate. A purine D-ribonucleoside-binding positions include 179-181 (EME) and 203-204 (SD). Residue D204 is the Proton donor of the active site.

This sequence belongs to the PNP/UDP phosphorylase family. In terms of assembly, homohexamer; trimer of homodimers.

The enzyme catalyses a purine D-ribonucleoside + phosphate = a purine nucleobase + alpha-D-ribose 1-phosphate. It carries out the reaction a purine 2'-deoxy-D-ribonucleoside + phosphate = a purine nucleobase + 2-deoxy-alpha-D-ribose 1-phosphate. In terms of biological role, catalyzes the reversible phosphorolytic breakdown of the N-glycosidic bond in the beta-(deoxy)ribonucleoside molecules, with the formation of the corresponding free purine bases and pentose-1-phosphate. This is Purine nucleoside phosphorylase DeoD-type from Streptococcus pyogenes serotype M4 (strain MGAS10750).